The primary structure comprises 317 residues: Endochitinase 3 (317 aa).

The signal sequence occupies residues 1–19 (MFVRNALVVTGLLAALTQA). Asparagine 25, asparagine 49, and asparagine 169 each carry an N-linked (GlcNAc...) asparagine glycan. Residues 29–317 (HKLTVYWGAE…NYQKEIKANL (289 aa)) enclose the GH18 domain. Residue glutamate 170 is the Proton donor of the active site. The N-linked (GlcNAc...) asparagine glycan is linked to asparagine 245.

This sequence belongs to the glycosyl hydrolase 18 family. Chitinase class III subfamily.

It is found in the secreted. It catalyses the reaction Random endo-hydrolysis of N-acetyl-beta-D-glucosaminide (1-&gt;4)-beta-linkages in chitin and chitodextrins.. Functionally, secreted chitinase involved in the degradation of chitin, a component of the cell walls of fungi and exoskeletal elements of some animals (including worms and arthropods). Participates in the infection process and directly acts in the penetration process of the host cuticle. Involved in heat-shock adaptation. The protein is Endochitinase 3 (chi3) of Metarhizium robertsii (strain ARSEF 23 / ATCC MYA-3075) (Metarhizium anisopliae (strain ARSEF 23)).